The primary structure comprises 684 residues: Fermitin family homolog 2 (684 aa).

The tract at residues 40–81 is interaction with membranes containing phosphatidylinositol phosphate; that stretch reads HIGGVMLKLVEKLDVKKDWSDHALWWEKKKTWLLKTHWTLDK. A disordered region spans residues 141-163; sequence LRKPRDPKKKKKKLEDAEEETLE. Positions 279-577 constitute an FERM domain; that stretch reads DLNPKYDAIR…SLPEFGITHF (299 aa). In terms of domain architecture, PH spans 378–474; that stretch reads KVFKPKKLTL…WMAACRLASK (97 aa). Lysine 381 serves as a coordination point for a 1,2-diacyl-sn-glycero-3-phospho-(1D-myo-inositol-3,4,5-trisphosphate).

This sequence belongs to the kindlin family.

The protein localises to the cytoplasm. It localises to the cell cortex. Its subcellular location is the cytoskeleton. It is found in the stress fiber. The protein resides in the cell junction. The protein localises to the focal adhesion. It localises to the membrane. Its subcellular location is the cell projection. It is found in the lamellipodium membrane. The protein resides in the nucleus. The protein localises to the myofibril. It localises to the sarcomere. Its subcellular location is the i band. It is found in the cell surface. In terms of biological role, scaffolding protein that enhances integrin activation mediated by TLN1 and/or TLN2, but activates integrins only weakly by itself. Binds to membranes enriched in phosphoinositides. Enhances integrin-mediated cell adhesion onto the extracellular matrix and cell spreading; this requires both its ability to interact with integrins and with phospholipid membranes. Required for the assembly of focal adhesions. Participates in the connection between extracellular matrix adhesion sites and the actin cytoskeleton and also in the orchestration of actin assembly and cell shape modulation. Plays a role in the TGFB1 and integrin signaling pathways. Stabilizes active CTNNB1 and plays a role in the regulation of transcription mediated by CTNNB1 and TCF7L2/TCF4 and in Wnt signaling. Required for normal embryonic development, including normal heart morphogenesis and normal angiogenesis. This chain is Fermitin family homolog 2 (fermt2), found in Danio rerio (Zebrafish).